A 1863-amino-acid polypeptide reads, in one-letter code: 5'-3' DNA helicase ZGRF1 (1863 aa).

Disordered regions lie at residues 78 to 110 (SRAV…QPSG), 132 to 196 (ENSE…PLSL), and 300 to 349 (TQSI…PEAQ). A compositionally biased stretch (basic and acidic residues) spans 81 to 90 (VEPDGSREAL). A compositionally biased stretch (low complexity) spans 92-105 (SGSRTLVSSSRSLG). Composition is skewed to polar residues over residues 173–185 (PVST…ITFS) and 300–321 (TQSI…TTSR). Residues S331 and S445 each carry the phosphoserine modification. 3 disordered regions span residues 460–496 (PVSP…SKSN), 524–545 (TSDT…ERWE), and 610–664 (GDVK…GVSP). Over residues 533-545 (EDSRLSQDSERWE) the composition is skewed to basic and acidic residues. Zn(2+) contacts are provided by C1111, H1113, C1136, and C1144. The GRF-type zinc-finger motif lies at 1111–1153 (CHHNQPAKLVMVKKEGPNKGRLFYTCDKSKDNQCKFFKWLEEV).

As to quaternary structure, interacts with DNA repair protein RAD51; the interaction promotes RAD51 strand exchange activity. Also interacts with DNA repair proteins EXO1 and BRCA1; the interactions are increased following DNA damage induction.

The protein localises to the nucleus. It carries out the reaction ATP + H2O = ADP + phosphate + H(+). The catalysed reaction is Couples ATP hydrolysis with the unwinding of duplex DNA at the replication fork by translocating in the 5'-3' direction. This creates two antiparallel DNA single strands (ssDNA). The leading ssDNA polymer is the template for DNA polymerase III holoenzyme which synthesizes a continuous strand.. In terms of biological role, 5'-3' DNA helicase which is recruited to sites of DNA damage and promotes repair of replication-blocking DNA lesions through stimulation of homologous recombination (HR). Promotes HR by directly stimulating RAD51-mediated strand exchange activity. Not required to load RAD51 at sites of DNA damage but promotes recombinational repair after RAD51 recruitment. Also promotes HR by positively regulating EXO1-mediated DNA end resection of DNA double-strand breaks. Required for recruitment of replication protein RPA2 to DNA damage sites. Promotes the initiation of the G2/M checkpoint but not its maintenance. Catalyzes Holliday junction branch migration and dissociation of D-loops and DNA flaps. The polypeptide is 5'-3' DNA helicase ZGRF1 (Zgrf1) (Mus musculus (Mouse)).